Here is a 371-residue protein sequence, read N- to C-terminus: MGRVISSWRVLAVVAALMAMAAVELCAAIPFDERDLESDEALWDLYERWQEHHHVPRHHGEKHRRFGAFKDNVRYIHEHNKRGGRGYRLRLNRFGDMGREEFRATFAGSHANDLRRDGLAAPPLPGFMYEGVRDLPRAVDWRRKGAVTGVKDQGKCGSCWAFSTVVSVEGINAIRTGRLVSLSEQELIDCDTADNSGCQGGLMENAFEYIKHSGGITTESAYPYRAANGTCDAVRARRAPLVVIDGHQNVPANSEAALAKAVANQPVSVAIDAGDQSFQFYSDGVFAGDCGTDLDHGVAVVGYGETNDGTEYWIVKNSWGTAWGEGGYIRMQRDSGYDGGLCGIAMEASYPVKFSPNRVTPRRALGAKETQ.

An N-terminal signal peptide occupies residues 1–28 (MGRVISSWRVLAVVAALMAMAAVELCAA). Residues 29 to 133 (IPFDERDLES…LPGFMYEGVR (105 aa)) constitute a propeptide, activation peptide. Disulfide bonds link Cys-156–Cys-198, Cys-190–Cys-231, and Cys-290–Cys-342. Residue Cys-159 is part of the active site. Asn-228 is a glycosylation site (N-linked (GlcNAc...) asparagine). Residues His-296 and Asn-317 contribute to the active site.

This sequence belongs to the peptidase C1 family. In terms of tissue distribution, expressed in germinating seeds.

The protein localises to the protein storage vacuole. Functionally, cysteine endopeptidase that digests in vitro both the acidic and basic subunits of glutelin, the major seed storage protein of rice. Acts as a negative regulator of cell death. In Oryza sativa subsp. japonica (Rice), this protein is Cysteine endopeptidase Rep1.